We begin with the raw amino-acid sequence, 344 residues long: Heat-inducible transcription repressor HrcA (344 aa).

It belongs to the HrcA family.

Functionally, negative regulator of class I heat shock genes (grpE-dnaK-dnaJ and groELS operons). Prevents heat-shock induction of these operons. The chain is Heat-inducible transcription repressor HrcA from Streptococcus agalactiae serotype III (strain NEM316).